The chain runs to 263 residues: MKIMKLAGAVAIFSLFLTACNDKAEKLKVGVISGPEHKVMEVAAKIAKEKYNRDVELVVFTDYATPNAALDKGDLDLNAFQHKPYLDNQIQEKGYKLVPVGNTFVYPIAAYSKKIKSLAELKDGDTIAVPNDPTNLARALILLEKQDLIKLRADAGLKATSVDIIENPRKLVIQEIEAPLLPRTLDDVAFSIINTTYAGQNGLTPTKDGIFVEDKDSPYVNLIVARENNQHSEAVKDLVKAYQTEEVYNKANEEFKGAMIKGW.

A signal peptide spans 1–19 (MKIMKLAGAVAIFSLFLTA). C20 is lipidated: N-palmitoyl cysteine. Residue C20 is the site of S-diacylglycerol cysteine attachment.

This sequence belongs to the NlpA lipoprotein family.

It is found in the cell outer membrane. The polypeptide is Outer membrane lipoprotein 3 (plpC) (Mannheimia haemolytica (Pasteurella haemolytica)).